Consider the following 246-residue polypeptide: MKKLVLVRHGQSQWNLENLFTGWTDVDLTEQGQKEAATAAQLLQKEGIFFQTAFTSYLKRAIKTLNIILDVMDLDWIDVHKTWRLNEKHYGALQGLNKKETAAQYGQEQVLLWRRSFDTAPAALEYSDARAPHNDRRYQRVARQDLPLTESLKDTIARIMPYWEVVIKPVLIAENTVLIVAHGNSLRAIIKHLKGISETEITDLNLPTGIPYVFEFDDDMNLCADYFLGDTEAIKKLQESVAKQSQ.

Substrate is bound by residues 8–15 (RHGQSQWN), 21–22 (TG), Arg-60, 87–90 (EKHY), Lys-98, 114–115 (RR), and 183–184 (GN). Residue His-9 is the Tele-phosphohistidine intermediate of the active site. Catalysis depends on Glu-87, which acts as the Proton donor/acceptor.

This sequence belongs to the phosphoglycerate mutase family. BPG-dependent PGAM subfamily. In terms of assembly, homodimer.

It carries out the reaction (2R)-2-phosphoglycerate = (2R)-3-phosphoglycerate. Its pathway is carbohydrate degradation; glycolysis; pyruvate from D-glyceraldehyde 3-phosphate: step 3/5. Functionally, catalyzes the interconversion of 2-phosphoglycerate and 3-phosphoglycerate. The polypeptide is 2,3-bisphosphoglycerate-dependent phosphoglycerate mutase (Dichelobacter nodosus (strain VCS1703A)).